A 247-amino-acid chain; its full sequence is Dof zinc finger protein DOF3.5 (247 aa).

A Dof-type zinc finger spans residues 25-79 (PSCPRCGSSNTKFCYYNNYSLTQPRYFCKGCRRYWTKGGSLRNVPVGGGCRKSRR). Residues cysteine 27, cysteine 30, cysteine 52, and cysteine 55 each contribute to the Zn(2+) site. A disordered region spans residues 70-100 (VGGGCRKSRRPKSSSGNNTKTSLTANSGNPG). A compositionally biased stretch (polar residues) spans 82–94 (SSSGNNTKTSLTA).

Its subcellular location is the nucleus. In terms of biological role, transcription factor that binds specifically to a 5'-AA[AG]G-3' consensus core sequence. This Arabidopsis thaliana (Mouse-ear cress) protein is Dof zinc finger protein DOF3.5 (DOF3.5).